The chain runs to 156 residues: uncharacterized protein (156 aa).

This is an uncharacterized protein from Schizosaccharomyces pombe (strain 972 / ATCC 24843) (Fission yeast).